We begin with the raw amino-acid sequence, 114 residues long: ATP synthase epsilon chain (114 aa).

The protein belongs to the ATPase epsilon chain family. In terms of assembly, F-type ATPases have 2 components, CF(1) - the catalytic core - and CF(0) - the membrane proton channel. CF(1) has five subunits: alpha(3), beta(3), gamma(1), delta(1), epsilon(1). CF(0) has three main subunits: a, b and c.

The protein localises to the cell membrane. Its function is as follows. Produces ATP from ADP in the presence of a proton gradient across the membrane. This Wolbachia pipientis wMel protein is ATP synthase epsilon chain.